We begin with the raw amino-acid sequence, 206 residues long: Thymidylate kinase (206 aa).

Residue 10–17 participates in ATP binding; that stretch reads GIDGAGKS.

This sequence belongs to the thymidylate kinase family.

It carries out the reaction dTMP + ATP = dTDP + ADP. Its function is as follows. Phosphorylation of dTMP to form dTDP in both de novo and salvage pathways of dTTP synthesis. In Neisseria meningitidis serogroup A / serotype 4A (strain DSM 15465 / Z2491), this protein is Thymidylate kinase (tmk).